The primary structure comprises 520 residues: Probable methylmalonate-semialdehyde/malonate-semialdehyde dehydrogenase [acylating], mitochondrial (520 aa).

NAD(+) contacts are provided by Ala169, Phe171, Lys195, Glu198, Arg199, and Ser248. The Nucleophile role is filled by Cys303. Glu403 serves as a coordination point for NAD(+).

Belongs to the aldehyde dehydrogenase family. In terms of assembly, homotetramer.

The protein localises to the mitochondrion. It catalyses the reaction 2-methyl-3-oxopropanoate + NAD(+) + CoA + H2O = propanoyl-CoA + hydrogencarbonate + NADH + H(+). The enzyme catalyses 3-oxopropanoate + NAD(+) + CoA + H2O = hydrogencarbonate + acetyl-CoA + NADH + H(+). In terms of biological role, probable malonate and methylmalonate semialdehyde dehydrogenase involved in the catabolism of valine, thymine, and compounds catabolized by way of beta-alanine, including uracil and cytidine. This Drosophila melanogaster (Fruit fly) protein is Probable methylmalonate-semialdehyde/malonate-semialdehyde dehydrogenase [acylating], mitochondrial.